The following is a 104-amino-acid chain: 2,4-dinitrotoluene dioxygenase system, ferredoxin component (104 aa).

The segment at 1–21 (MSENWIDAAARDEVPRGRRDR) is disordered. A Rieske domain is found at 5–101 (WIDAAARDEV…VKIENMRVML (97 aa)). Cysteine 45, histidine 47, cysteine 64, and histidine 67 together coordinate [2Fe-2S] cluster.

Belongs to the bacterial ring-hydroxylating dioxygenase ferredoxin component family. As to quaternary structure, the 2,4-dinitrotoluene dioxygenase (DNTDO) multicomponent enzyme system is composed of an electron transfer component and a dioxygenase component (iron sulfur protein (ISP)). The electron transfer component is composed of a ferredoxin reductase (DntAa) and a ferredoxin (DntAb), and the dioxygenase component is formed of a large alpha subunit (DntAc) and a small beta subunit (DntAd). It depends on [2Fe-2S] cluster as a cofactor.

In terms of biological role, component of the 2,4-dinitrotoluene dioxygenase (DNTDO) multicomponent enzyme system which catalyzes the incorporation of both atoms of molecular oxygen into 2,4-dinitrotoluene (DNT) to form 4-methyl-5-nitrocatechol (MNC) and nitrite. Functions as an intermediate electron transfer protein via a specific interaction with iron sulfur protein components (ISP)(DntAc and DntAd). Also able to convert naphthalene to cis-(1R,2S)-dihydroxy-1,2-dihydronaphthalene. This chain is 2,4-dinitrotoluene dioxygenase system, ferredoxin component, found in Burkholderia sp. (strain RASC).